The sequence spans 445 residues: Methionine aminopeptidase 2-3 (445 aa).

Residues 14–115 (ISDADANGAD…ENRYRTTSEE (102 aa)) form a disordered region. Positions 38-47 (EDDDSDDDVA) are enriched in acidic residues. The segment covering 60 to 75 (AKKKKNKKRKPKKKQP) has biased composition (basic residues). The span at 85–95 (PLSQLFPNNTY) shows a compositional bias: polar residues. Basic and acidic residues predominate over residues 97 to 115 (KGEEVEYKDENRYRTTSEE). H198 is a binding site for substrate. A divalent metal cation-binding residues include D218, D229, and H298. Residue H306 coordinates substrate. Residues E331 and E426 each coordinate a divalent metal cation.

This sequence belongs to the peptidase M24A family. Methionine aminopeptidase eukaryotic type 2 subfamily. Co(2+) serves as cofactor. Requires Zn(2+) as cofactor. It depends on Mn(2+) as a cofactor. The cofactor is Fe(2+).

It is found in the cytoplasm. It catalyses the reaction Release of N-terminal amino acids, preferentially methionine, from peptides and arylamides.. Functionally, cotranslationally removes the N-terminal methionine from nascent proteins. The N-terminal methionine is often cleaved when the second residue in the primary sequence is small and uncharged (Met-Ala-, Cys, Gly, Pro, Ser, Thr, or Val). The sequence is that of Methionine aminopeptidase 2-3 from Neosartorya fischeri (strain ATCC 1020 / DSM 3700 / CBS 544.65 / FGSC A1164 / JCM 1740 / NRRL 181 / WB 181) (Aspergillus fischerianus).